A 547-amino-acid chain; its full sequence is Cytochrome P450 78A1 (547 aa).

A compositionally biased stretch (low complexity) spans 84–94; the sequence is ASSRCPGAAAP. Positions 84 to 104 are disordered; sequence ASSRCPGAAAPRPRRDGPRRR. Cys-490 contacts heme.

Belongs to the cytochrome P450 family. Requires heme as cofactor. Shoot apex.

This is Cytochrome P450 78A1 (CYP78A1) from Zea mays (Maize).